The primary structure comprises 400 residues: Tryptophan synthase beta chain (400 aa).

An N6-(pyridoxal phosphate)lysine modification is found at K90.

It belongs to the TrpB family. In terms of assembly, tetramer of two alpha and two beta chains. Requires pyridoxal 5'-phosphate as cofactor.

It carries out the reaction (1S,2R)-1-C-(indol-3-yl)glycerol 3-phosphate + L-serine = D-glyceraldehyde 3-phosphate + L-tryptophan + H2O. It functions in the pathway amino-acid biosynthesis; L-tryptophan biosynthesis; L-tryptophan from chorismate: step 5/5. Its function is as follows. The beta subunit is responsible for the synthesis of L-tryptophan from indole and L-serine. The polypeptide is Tryptophan synthase beta chain (Alkaliphilus metalliredigens (strain QYMF)).